Reading from the N-terminus, the 160-residue chain is Eosinophil cationic protein (160 aa).

Residues 1–27 (MVPKLFTSQICLLLLLGLMGVEGSLHA) form the signal peptide. The interval 28 to 72 (RPPQFTRAQWFAIQHISLNPPRCTIAMRVINNYRWRCKNQNTFLR) is required for nearly all of the bactericidal activities; partially involved in LPS-binding. His42 (proton acceptor) is an active-site residue. 4 disulfides stabilise this stretch: Cys50–Cys110, Cys64–Cys123, Cys82–Cys138, and Cys89–Cys98. A 3'-nitrotyrosine modification is found at Tyr60. 65–69 (KNQNT) contacts substrate. 3 N-linked (GlcNAc...) asparagine glycosylation sites follow: Asn84, Asn92, and Asn119. His155 functions as the Proton donor in the catalytic mechanism.

It belongs to the pancreatic ribonuclease family. As to quaternary structure, interacts with bacterial lipopolysaccharide (LPS) and lipoteichoic acid (LTA). In vitro interacts with phospholipid bilayers.

Its subcellular location is the secreted. Cytotoxin and helminthotoxin with low-efficiency ribonuclease activity. Possesses a wide variety of biological activities. Exhibits antibacterial activity. This is Eosinophil cationic protein (RNASE3) from Gorilla gorilla gorilla (Western lowland gorilla).